A 795-amino-acid polypeptide reads, in one-letter code: Glutamine--tRNA ligase, cytoplasmic (795 aa).

Positions 188–220 are disordered; sequence ADNEKPTKKKEKKEKPAKVEEKKAVVETTAEPS. Residues 200-212 are compositionally biased toward basic and acidic residues; it reads KEKPAKVEEKKAV. The short motif at 277–287 is the 'HIGH' region element; the sequence is PEPNGYLHIGH. ATP is bound by residues 278 to 280 and 284 to 290; these read EPN and HIGHAKA. L-glutamine contacts are provided by aspartate 310 and tyrosine 450. Residues threonine 469, 498–499, and 506–508 each bind ATP; these read RL and MSK. A 'KMSKS' region motif is present at residues 505–509; the sequence is VMSKR.

Belongs to the class-I aminoacyl-tRNA synthetase family.

It localises to the cytoplasm. The protein localises to the cytosol. The enzyme catalyses tRNA(Gln) + L-glutamine + ATP = L-glutaminyl-tRNA(Gln) + AMP + diphosphate. This is Glutamine--tRNA ligase, cytoplasmic from Arabidopsis thaliana (Mouse-ear cress).